Reading from the N-terminus, the 376-residue chain is Chaperone protein DnaJ (376 aa).

The 66-residue stretch at Asp-5 to Gly-70 folds into the J domain. The segment at Gly-133 to Lys-211 adopts a CR-type zinc-finger fold. Zn(2+) is bound by residues Cys-146, Cys-149, Cys-163, Cys-166, Cys-185, Cys-188, Cys-199, and Cys-202. 4 CXXCXGXG motif repeats span residues Cys-146 to Gly-153, Cys-163 to Gly-170, Cys-185 to Gly-192, and Cys-199 to Gly-206.

Belongs to the DnaJ family. In terms of assembly, homodimer. Zn(2+) serves as cofactor.

The protein resides in the cytoplasm. Participates actively in the response to hyperosmotic and heat shock by preventing the aggregation of stress-denatured proteins and by disaggregating proteins, also in an autonomous, DnaK-independent fashion. Unfolded proteins bind initially to DnaJ; upon interaction with the DnaJ-bound protein, DnaK hydrolyzes its bound ATP, resulting in the formation of a stable complex. GrpE releases ADP from DnaK; ATP binding to DnaK triggers the release of the substrate protein, thus completing the reaction cycle. Several rounds of ATP-dependent interactions between DnaJ, DnaK and GrpE are required for fully efficient folding. Also involved, together with DnaK and GrpE, in the DNA replication of plasmids through activation of initiation proteins. This is Chaperone protein DnaJ from Mannheimia succiniciproducens (strain KCTC 0769BP / MBEL55E).